The following is a 76-amino-acid chain: MEKLTILLLVTAVLMSTQALMQSGIEKRQRAKIKFFSKRKTTAERWWEGECYDWLRQCSSPAQCCSGNCGAHCKAW.

Positions 1–19 (MEKLTILLLVTAVLMSTQA) are cleaved as a signal peptide. A propeptide spanning residues 20–45 (LMQSGIEKRQRAKIKFFSKRKTTAER) is cleaved from the precursor. Cystine bridges form between cysteine 51–cysteine 65, cysteine 58–cysteine 69, and cysteine 64–cysteine 73.

This sequence belongs to the conotoxin O2 superfamily. In terms of tissue distribution, expressed by the venom duct.

It localises to the secreted. In terms of biological role, probable neurotoxin. The chain is Conotoxin Im6.9 from Conus imperialis (Imperial cone).